A 727-amino-acid polypeptide reads, in one-letter code: Polyribonucleotide nucleotidyltransferase (727 aa).

Positions 488 and 494 each coordinate Mg(2+). A KH domain is found at proline 555–isoleucine 614. The S1 motif domain maps to glycine 624–lysine 692. A disordered region spans residues methionine 691–glutamine 727. Basic and acidic residues predominate over residues proline 707–glycine 720.

The protein belongs to the polyribonucleotide nucleotidyltransferase family. Mg(2+) serves as cofactor.

It is found in the cytoplasm. It carries out the reaction RNA(n+1) + phosphate = RNA(n) + a ribonucleoside 5'-diphosphate. Involved in mRNA degradation. Catalyzes the phosphorolysis of single-stranded polyribonucleotides processively in the 3'- to 5'-direction. The chain is Polyribonucleotide nucleotidyltransferase from Acidovorax sp. (strain JS42).